The chain runs to 492 residues: Catalase isozyme 3 (492 aa).

Catalysis depends on residues histidine 65 and asparagine 138. Tyrosine 347 serves as a coordination point for heme.

It belongs to the catalase family. In terms of assembly, homotetramer. Requires heme as cofactor. Abundant in green cotyledons, etiolated cotyledons, green hypocotyl and root, but not in young leaf.

It localises to the peroxisome. The catalysed reaction is 2 H2O2 = O2 + 2 H2O. Its function is as follows. Occurs in almost all aerobically respiring organisms and serves to protect cells from the toxic effects of hydrogen peroxide. The chain is Catalase isozyme 3 (CAT3) from Cucurbita pepo (Vegetable marrow).